The following is a 232-amino-acid chain: Esterase YpfH (232 aa).

Active-site charge relay system residues include Ser-111, Asp-159, and His-191.

This sequence belongs to the AB hydrolase superfamily. AB hydrolase 2 family.

Displays esterase activity toward palmitoyl-CoA and pNP-butyrate. This is Esterase YpfH (ypfH) from Escherichia coli (strain K12).